The primary structure comprises 122 residues: Ribosomal protein eL22-like (122 aa).

Phosphoserine occurs at positions 112, 118, and 120.

It belongs to the eukaryotic ribosomal protein eL22 family.

This chain is Ribosomal protein eL22-like (RPL22L1), found in Bos taurus (Bovine).